A 51-amino-acid polypeptide reads, in one-letter code: ATP synthase subunit epsilon-like protein, mitochondrial (51 aa).

An N6-acetyllysine modification is found at K21.

This sequence belongs to the eukaryotic ATPase epsilon family. As to quaternary structure, F-type ATPases have 2 components, CF(1) - the catalytic core - and CF(0) - the membrane proton channel. CF(1) has five subunits: alpha(3), beta(3), gamma(1), delta(1), epsilon(1). CF(0) seems to have nine subunits: a, b, c, d, e, f, g, F6 and 8 (or A6L).

It is found in the mitochondrion inner membrane. Functionally, mitochondrial membrane ATP synthase (F(1)F(0) ATP synthase or Complex V) produces ATP from ADP in the presence of a proton gradient across the membrane which is generated by electron transport complexes of the respiratory chain. F-type ATPases consist of two structural domains, F(1) - containing the extramembraneous catalytic core, and F(0) - containing the membrane proton channel, linked together by a central stalk and a peripheral stalk. During catalysis, ATP synthesis in the catalytic domain of F(1) is coupled via a rotary mechanism of the central stalk subunits to proton translocation. Part of the complex F(1) domain and of the central stalk which is part of the complex rotary element. Rotation of the central stalk against the surrounding alpha(3)beta(3) subunits leads to hydrolysis of ATP in three separate catalytic sites on the beta subunits. This Homo sapiens (Human) protein is ATP synthase subunit epsilon-like protein, mitochondrial.